We begin with the raw amino-acid sequence, 448 residues long: MNLNQIHNVYFIGIGGIGMSALARYFKFIGKNVSGYDKTPSILTSELIESGIAIHFEDNIDLIPKDYFVENTLVIITPAVPKSHSEWNYFLEREYHVKKRAEVLGIITKDTFCLAVAGTHGKTTTSSILGHILYESGADVTAFIGGIVENYNSNLIGSGKTVTVVEADEFDRSFLHLYPNIACVTSMDADHLDIYGDDAAIKASFKEFADKVEDKNKLFVINGLPLKGITVGANDDSQFVAHNIRIENGWYIFDVKTPTENIKDLKFGLPGKHNLTNALLALAMARTFGTPTESIAKALASFKGVKRRFSFQIRKPKFVYIDDYAHHPTEINAVHQAVRELYPNEKVLAVFQPHLFSRTKDFANDFAKSLSQFDEILLLDIYPARELPIEGINSGWLLDKVENKNKKLVHKNELIPLLKKSDATVIVTIGAGDIGEMVVNIKKELDEK.

Residue 118–124 (GTHGKTT) participates in ATP binding.

Belongs to the MurCDEF family.

Its subcellular location is the cytoplasm. The enzyme catalyses UDP-N-acetyl-alpha-D-muramate + L-alanine + ATP = UDP-N-acetyl-alpha-D-muramoyl-L-alanine + ADP + phosphate + H(+). It functions in the pathway cell wall biogenesis; peptidoglycan biosynthesis. Functionally, cell wall formation. The protein is UDP-N-acetylmuramate--L-alanine ligase of Flavobacterium psychrophilum (strain ATCC 49511 / DSM 21280 / CIP 103535 / JIP02/86).